The following is a 527-amino-acid chain: Rhamnogalacturonate lyase A (527 aa).

The signal sequence occupies residues M1 to A20. N27 and N46 each carry an N-linked (GlcNAc...) asparagine glycan. 2 disulfides stabilise this stretch: C50/C93 and C184/C193. N351 is a glycosylation site (N-linked (GlcNAc...) asparagine).

It belongs to the polysaccharide lyase 4 family.

The protein localises to the secreted. The catalysed reaction is Endotype eliminative cleavage of L-alpha-rhamnopyranosyl-(1-&gt;4)-alpha-D-galactopyranosyluronic acid bonds of rhamnogalacturonan I domains in ramified hairy regions of pectin leaving L-rhamnopyranose at the reducing end and 4-deoxy-4,5-unsaturated D-galactopyranosyluronic acid at the non-reducing end.. In terms of biological role, pectinolytic enzymes consist of four classes of enzymes: pectin lyase, polygalacturonase, pectin methylesterase and rhamnogalacturonase. Degrades the rhamnogalacturonan I (RG-I) backbone of pectin. Active against linseed rhamnogalacturonan. This Emericella nidulans (strain FGSC A4 / ATCC 38163 / CBS 112.46 / NRRL 194 / M139) (Aspergillus nidulans) protein is Rhamnogalacturonate lyase A (rglA).